The following is a 1221-amino-acid chain: DNA-directed RNA polymerase subunit beta' (1221 aa).

The Zn(2+) site is built by C60, C62, C75, and C78. D449, D451, and D453 together coordinate Mg(2+). 4 residues coordinate Zn(2+): C820, C894, C901, and C904.

The protein belongs to the RNA polymerase beta' chain family. In terms of assembly, the RNAP catalytic core consists of 2 alpha, 1 beta, 1 beta' and 1 omega subunit. When a sigma factor is associated with the core the holoenzyme is formed, which can initiate transcription. It depends on Mg(2+) as a cofactor. Requires Zn(2+) as cofactor.

It carries out the reaction RNA(n) + a ribonucleoside 5'-triphosphate = RNA(n+1) + diphosphate. In terms of biological role, DNA-dependent RNA polymerase catalyzes the transcription of DNA into RNA using the four ribonucleoside triphosphates as substrates. The sequence is that of DNA-directed RNA polymerase subunit beta' from Ligilactobacillus salivarius (strain UCC118) (Lactobacillus salivarius).